The sequence spans 253 residues: Triosephosphate isomerase, cytosolic (253 aa).

Residues Asn-10 and Lys-12 each contribute to the substrate site. The active-site Electrophile is the His-96. Glu-166 functions as the Proton acceptor in the catalytic mechanism.

Belongs to the triosephosphate isomerase family. As to quaternary structure, homodimer.

The protein resides in the cytoplasm. The enzyme catalyses D-glyceraldehyde 3-phosphate = dihydroxyacetone phosphate. It functions in the pathway carbohydrate biosynthesis; gluconeogenesis. It participates in carbohydrate degradation; glycolysis; D-glyceraldehyde 3-phosphate from glycerone phosphate: step 1/1. This chain is Triosephosphate isomerase, cytosolic (TPI), found in Oryza sativa subsp. japonica (Rice).